Consider the following 211-residue polypeptide: N-(5'-phosphoribosyl)anthranilate isomerase (211 aa).

This sequence belongs to the TrpF family.

It catalyses the reaction N-(5-phospho-beta-D-ribosyl)anthranilate = 1-(2-carboxyphenylamino)-1-deoxy-D-ribulose 5-phosphate. It participates in amino-acid biosynthesis; L-tryptophan biosynthesis; L-tryptophan from chorismate: step 3/5. This is N-(5'-phosphoribosyl)anthranilate isomerase from Desulfovibrio desulfuricans (strain ATCC 27774 / DSM 6949 / MB).